A 65-amino-acid polypeptide reads, in one-letter code: Large ribosomal subunit protein bL35 (65 aa).

Residues 1–23 (MPKIKTNRGAAKRFKKTGTGKVK) form a disordered region. Residues 10-23 (AAKRFKKTGTGKVK) are compositionally biased toward basic residues.

The protein belongs to the bacterial ribosomal protein bL35 family.

This Trichlorobacter lovleyi (strain ATCC BAA-1151 / DSM 17278 / SZ) (Geobacter lovleyi) protein is Large ribosomal subunit protein bL35.